We begin with the raw amino-acid sequence, 123 residues long: Protein Wnt-3b (123 aa).

Residue serine 1 is the site of O-palmitoleoyl serine; by PORCN attachment. A disulfide bridge links cysteine 89 with cysteine 104. A glycan (N-linked (GlcNAc...) asparagine) is linked at asparagine 90.

It belongs to the Wnt family. In terms of processing, palmitoleoylation is required for efficient binding to frizzled receptors. Depalmitoleoylation leads to Wnt signaling pathway inhibition.

Its subcellular location is the secreted. It localises to the extracellular space. It is found in the extracellular matrix. Its function is as follows. Ligand for members of the frizzled family of seven transmembrane receptors. Probable developmental protein. May be a signaling molecule which affects the development of discrete regions of tissues. Is likely to signal over only few cell diameters. The protein is Protein Wnt-3b (WNT-3B) of Plethodon jordani (Red-cheeked salamander).